Consider the following 125-residue polypeptide: Phosphoribosyl-AMP cyclohydrolase (125 aa).

D74 is a Mg(2+) binding site. C75 provides a ligand contact to Zn(2+). Mg(2+)-binding residues include D76 and D78. Zn(2+) contacts are provided by C92 and C99.

It belongs to the PRA-CH family. As to quaternary structure, homodimer. Mg(2+) is required as a cofactor. It depends on Zn(2+) as a cofactor.

Its subcellular location is the cytoplasm. It catalyses the reaction 1-(5-phospho-beta-D-ribosyl)-5'-AMP + H2O = 1-(5-phospho-beta-D-ribosyl)-5-[(5-phospho-beta-D-ribosylamino)methylideneamino]imidazole-4-carboxamide. It functions in the pathway amino-acid biosynthesis; L-histidine biosynthesis; L-histidine from 5-phospho-alpha-D-ribose 1-diphosphate: step 3/9. In terms of biological role, catalyzes the hydrolysis of the adenine ring of phosphoribosyl-AMP. This chain is Phosphoribosyl-AMP cyclohydrolase, found in Geobacter sp. (strain M21).